The following is a 192-amino-acid chain: Histone H3-like centromeric protein CSE4 (192 aa).

The tract at residues 88 to 190 (AKSHGSKYKP…MQLARRIRGQ (103 aa)) is H3-like.

The protein belongs to the histone H3 family. Component of centromeric nucleosomes, where DNA is wrapped around a histone octamer core. The octamer contains two molecules each of H2A, H2B, CSE4/CENPA and H4 assembled in one CSE4-H4 heterotetramer and two H2A-H2B heterodimers. Interacts with the inner kinetochore. Ubiquitinated. Is degraded through ubiquitin-mediated proteolysis when not protected by its association to the kinetochore.

The protein resides in the nucleus. Its subcellular location is the chromosome. It is found in the centromere. Histone H3-like nucleosomal protein that is specifically found in centromeric nucleosomes. Replaces conventional H3 in the nucleosome core of centromeric chromatin that serves as an assembly site for the inner kinetochore. Required for recruitment and assembly of kinetochore proteins, mitotic progression and chromosome segregation. May serve as an epigenetic mark that propagates centromere identity through replication and cell division. In Kluyveromyces marxianus (Yeast), this protein is Histone H3-like centromeric protein CSE4 (CSE4).